The sequence spans 391 residues: Uroporphyrinogen decarboxylase, chloroplastic (391 aa).

Substrate contacts are provided by residues 71 to 75 (RQAGR), phenylalanine 90, serine 120, aspartate 121, tyrosine 198, serine 253, and histidine 368.

This sequence belongs to the uroporphyrinogen decarboxylase family. Homodimer.

It localises to the plastid. Its subcellular location is the chloroplast. The catalysed reaction is uroporphyrinogen III + 4 H(+) = coproporphyrinogen III + 4 CO2. It functions in the pathway porphyrin-containing compound metabolism; protoporphyrin-IX biosynthesis; coproporphyrinogen-III from 5-aminolevulinate: step 4/4. In terms of biological role, catalyzes the decarboxylation of four acetate groups of uroporphyrinogen-III to yield coproporphyrinogen-III. In Nicotiana tabacum (Common tobacco), this protein is Uroporphyrinogen decarboxylase, chloroplastic (DCUP).